A 184-amino-acid polypeptide reads, in one-letter code: dCTP deaminase (184 aa).

107–112 lines the dCTP pocket; it reads KSTIAR. The Proton donor/acceptor role is filled by Glu133. Gln152, Tyr166, and Gln176 together coordinate dCTP.

This sequence belongs to the dCTP deaminase family. As to quaternary structure, homotrimer.

The enzyme catalyses dCTP + H2O + H(+) = dUTP + NH4(+). It functions in the pathway pyrimidine metabolism; dUMP biosynthesis; dUMP from dCTP (dUTP route): step 1/2. Catalyzes the deamination of dCTP to dUTP. In Roseiflexus castenholzii (strain DSM 13941 / HLO8), this protein is dCTP deaminase.